A 466-amino-acid polypeptide reads, in one-letter code: Soluble pyridine nucleotide transhydrogenase (466 aa).

36–45 (ERYNNVGGGC) is an FAD binding site.

This sequence belongs to the class-I pyridine nucleotide-disulfide oxidoreductase family. FAD serves as cofactor.

It localises to the cytoplasm. It catalyses the reaction NAD(+) + NADPH = NADH + NADP(+). In terms of biological role, conversion of NADPH, generated by peripheral catabolic pathways, to NADH, which can enter the respiratory chain for energy generation. This chain is Soluble pyridine nucleotide transhydrogenase, found in Yersinia enterocolitica serotype O:8 / biotype 1B (strain NCTC 13174 / 8081).